Consider the following 180-residue polypeptide: Shikimate kinase (180 aa).

14-19 (GAGKST) contributes to the ATP binding site. Ser-18 lines the Mg(2+) pocket. Positions 36, 60, and 82 each coordinate substrate. Arg-120 serves as a coordination point for ATP. Arg-140 provides a ligand contact to substrate. Residue Gln-157 participates in ATP binding.

Belongs to the shikimate kinase family. As to quaternary structure, monomer. It depends on Mg(2+) as a cofactor.

The protein localises to the cytoplasm. The enzyme catalyses shikimate + ATP = 3-phosphoshikimate + ADP + H(+). The protein operates within metabolic intermediate biosynthesis; chorismate biosynthesis; chorismate from D-erythrose 4-phosphate and phosphoenolpyruvate: step 5/7. Its function is as follows. Catalyzes the specific phosphorylation of the 3-hydroxyl group of shikimic acid using ATP as a cosubstrate. This Haemophilus influenzae (strain PittEE) protein is Shikimate kinase.